A 503-amino-acid polypeptide reads, in one-letter code: Cobyric acid synthase (503 aa).

The region spanning 251 to 450 is the GATase cobBQ-type domain; sequence DLDIAVIRLP…IHGIFENAAF (200 aa). The Nucleophile role is filled by cysteine 331. Histidine 442 is an active-site residue.

It belongs to the CobB/CobQ family. CobQ subfamily.

It participates in cofactor biosynthesis; adenosylcobalamin biosynthesis. Catalyzes amidations at positions B, D, E, and G on adenosylcobyrinic A,C-diamide. NH(2) groups are provided by glutamine, and one molecule of ATP is hydrogenolyzed for each amidation. The polypeptide is Cobyric acid synthase (Dehalococcoides mccartyi (strain ATCC BAA-2100 / JCM 16839 / KCTC 5957 / BAV1)).